Reading from the N-terminus, the 237-residue chain is MLSALLIDDERFAREELAELLAESGQIEVIGQASNAIEGLKKINQLKPDVVFLDIQMPQISGIELLSMLDPETMPEVVFVTAYDQYALQAFEDNAFDYLLKPVDTERLAKTVQRLLRQHKKSDYSPLTQPSLDQIPCTGLNRIVLLPINEVEFAYSDISGVNVQTAQQKATSQLTLKVLEEKTALVRCHRQYLVNLKAIREIKLLENGLAEMITHAGHKVPVSRRYLKELKEMLGFY.

Positions 3–116 (SALLIDDERF…RLAKTVQRLL (114 aa)) constitute a Response regulatory domain. Aspartate 54 carries the 4-aspartylphosphate modification. An HTH LytTR-type domain is found at 135-236 (IPCTGLNRIV…LKELKEMLGF (102 aa)).

This is an uncharacterized protein from Vibrio cholerae serotype O1 (strain ATCC 39315 / El Tor Inaba N16961).